Reading from the N-terminus, the 146-residue chain is 3-hydroxyacyl-[acyl-carrier-protein] dehydratase FabZ (146 aa).

Residue His-49 is part of the active site.

It belongs to the thioester dehydratase family. FabZ subfamily.

Its subcellular location is the cytoplasm. The enzyme catalyses a (3R)-hydroxyacyl-[ACP] = a (2E)-enoyl-[ACP] + H2O. In terms of biological role, involved in unsaturated fatty acids biosynthesis. Catalyzes the dehydration of short chain beta-hydroxyacyl-ACPs and long chain saturated and unsaturated beta-hydroxyacyl-ACPs. The polypeptide is 3-hydroxyacyl-[acyl-carrier-protein] dehydratase FabZ (Pseudomonas syringae pv. tomato (strain ATCC BAA-871 / DC3000)).